Here is a 148-residue protein sequence, read N- to C-terminus: Ribosome maturation factor RimP (148 aa).

Belongs to the RimP family.

Its subcellular location is the cytoplasm. Required for maturation of 30S ribosomal subunits. This Treponema denticola (strain ATCC 35405 / DSM 14222 / CIP 103919 / JCM 8153 / KCTC 15104) protein is Ribosome maturation factor RimP.